The chain runs to 285 residues: Protease HtpX homolog (285 aa).

A run of 2 helical transmembrane segments spans residues 7–27 (TAML…MIGG) and 30–50 (GMTI…WFSD). Histidine 131 is a binding site for Zn(2+). Residue glutamate 132 is part of the active site. Residue histidine 135 coordinates Zn(2+). 2 consecutive transmembrane segments (helical) span residues 146 to 166 (ISAT…FFGG) and 177 to 197 (IAGI…QMAI). Glutamate 202 serves as a coordination point for Zn(2+).

Belongs to the peptidase M48B family. The cofactor is Zn(2+).

It is found in the cell inner membrane. The protein is Protease HtpX homolog of Burkholderia mallei (strain NCTC 10247).